Consider the following 182-residue polypeptide: Isopentenyl-diphosphate Delta-isomerase (182 aa).

Residues His25 and His32 each coordinate Mn(2+). Residues 30 to 164 (LLHLAFSSWL…PWAFSPWMVM (135 aa)) enclose the Nudix hydrolase domain. The active site involves Cys67. His69 contacts Mn(2+). Mg(2+) is bound at residue Glu87. Mn(2+)-binding residues include Glu114 and Glu116. The active site involves Glu116.

It belongs to the IPP isomerase type 1 family. In terms of assembly, homodimer. Mg(2+) serves as cofactor. Requires Mn(2+) as cofactor.

The protein resides in the cytoplasm. It catalyses the reaction isopentenyl diphosphate = dimethylallyl diphosphate. The protein operates within isoprenoid biosynthesis; dimethylallyl diphosphate biosynthesis; dimethylallyl diphosphate from isopentenyl diphosphate: step 1/1. Functionally, catalyzes the 1,3-allylic rearrangement of the homoallylic substrate isopentenyl (IPP) to its highly electrophilic allylic isomer, dimethylallyl diphosphate (DMAPP). This is Isopentenyl-diphosphate Delta-isomerase from Escherichia coli O17:K52:H18 (strain UMN026 / ExPEC).